A 135-amino-acid polypeptide reads, in one-letter code: ATP synthase epsilon chain (135 aa).

It belongs to the ATPase epsilon chain family. As to quaternary structure, F-type ATPases have 2 components, CF(1) - the catalytic core - and CF(0) - the membrane proton channel. CF(1) has five subunits: alpha(3), beta(3), gamma(1), delta(1), epsilon(1). CF(0) has three main subunits: a, b and c.

It localises to the cell inner membrane. Produces ATP from ADP in the presence of a proton gradient across the membrane. The chain is ATP synthase epsilon chain from Rhodopseudomonas palustris (strain ATCC BAA-98 / CGA009).